Consider the following 281-residue polypeptide: NADPH-dependent 7-cyano-7-deazaguanine reductase (281 aa).

Residue 87 to 89 coordinates substrate; that stretch reads VES. Residue 89–90 participates in NADPH binding; sequence SK. C188 (thioimide intermediate) is an active-site residue. D195 functions as the Proton donor in the catalytic mechanism. 227-228 contacts substrate; the sequence is HE. 256–257 is an NADPH binding site; the sequence is RG.

The protein belongs to the GTP cyclohydrolase I family. QueF type 2 subfamily. As to quaternary structure, homodimer.

The protein resides in the cytoplasm. The catalysed reaction is 7-aminomethyl-7-carbaguanine + 2 NADP(+) = 7-cyano-7-deazaguanine + 2 NADPH + 3 H(+). Its pathway is tRNA modification; tRNA-queuosine biosynthesis. Its function is as follows. Catalyzes the NADPH-dependent reduction of 7-cyano-7-deazaguanine (preQ0) to 7-aminomethyl-7-deazaguanine (preQ1). The protein is NADPH-dependent 7-cyano-7-deazaguanine reductase of Aliivibrio fischeri (strain MJ11) (Vibrio fischeri).